The following is a 577-amino-acid chain: Probable HECT-type ubiquitin ligase-interacting protein creD (577 aa).

2 disordered regions span residues 376–398 (LDPA…GTLS) and 428–566 (NLHA…EEER). Polar residues-rich tracts occupy residues 428-447 (NLHA…NQLE) and 460-472 (SSGS…TSPE). Over residues 473–486 (LSRRPSDEVDHDHV) the composition is skewed to basic and acidic residues. The segment covering 528 to 544 (SPQQAHVRSANRSSSYF) has biased composition (polar residues).

It belongs to the arrestin family. Interacts with hulA.

Functionally, component of the regulatory network controlling carbon source utilization through ubiquitination and deubiquitination involving creA, creB, creC, creD and acrB. May be involved in signaling by recognizing appropriately phosphorylated substrates via its arrestin domains and then recruit a HECT-type ubiquitin ligase such as hulA, leading to ubiquitination of the substrate, providing a link between ubiquitination and phosphorylation in protein regulation and stability. The protein is Probable HECT-type ubiquitin ligase-interacting protein creD (creD) of Aspergillus terreus (strain NIH 2624 / FGSC A1156).